Reading from the N-terminus, the 443-residue chain is Adenylosuccinate synthetase (443 aa).

GTP-binding positions include 12–18 (GDEGKGK) and 40–42 (GHT). Asp13 acts as the Proton acceptor in catalysis. Mg(2+)-binding residues include Asp13 and Gly40. Residues 13–16 (DEGK), 38–41 (NAGH), Thr128, Arg142, Gln223, Thr238, and Arg302 each bind IMP. His41 serves as the catalytic Proton donor. Residue 298 to 304 (TTTGRRR) coordinates substrate. GTP-binding positions include Arg304, 330 to 332 (KLD), and 412 to 414 (SLG).

This sequence belongs to the adenylosuccinate synthetase family. Homodimer. Mg(2+) is required as a cofactor.

It is found in the cytoplasm. It catalyses the reaction IMP + L-aspartate + GTP = N(6)-(1,2-dicarboxyethyl)-AMP + GDP + phosphate + 2 H(+). The protein operates within purine metabolism; AMP biosynthesis via de novo pathway; AMP from IMP: step 1/2. Functionally, plays an important role in the de novo pathway of purine nucleotide biosynthesis. Catalyzes the first committed step in the biosynthesis of AMP from IMP. This Picosynechococcus sp. (strain ATCC 27264 / PCC 7002 / PR-6) (Agmenellum quadruplicatum) protein is Adenylosuccinate synthetase.